The primary structure comprises 793 residues: Putative potassium transporter 8 (793 aa).

Residues 1–22 (MDLEFGRGMRSPQRDSWKTTLL) lie on the Cytoplasmic side of the membrane. A helical membrane pass occupies residues 23–43 (LAYQSLGVVYGDLSISPLYVF). Topologically, residues 44-59 (KSTFAEDIQHSETNEE) are extracellular. Residues 60-80 (IFGVLSFVFWTLTLIPLIKYV) traverse the membrane as a helical segment. Over 81–151 (SIVLRADDNG…EKHKKLHTAL (71 aa)) the chain is Cytoplasmic. Residues 152 to 172 (LIMVLIGTCMVIGDGVLTPAI) traverse the membrane as a helical segment. Residues 173–191 (SVFSAVSGLEFSLSKDHRE) lie on the Extracellular side of the membrane. The helical transmembrane segment at 192–212 (YAVIPITCVILAFLFALQHYG) threads the bilayer. The Cytoplasmic segment spans residues 213–215 (THR). A helical membrane pass occupies residues 216 to 236 (VGFLFAPIVLAWLICMSALGL). Residues 237 to 264 (YNIIHWNPHVYQALNPCYMFKFLKKTRK) lie on the Extracellular side of the membrane. Residues 265–285 (YGWMSLGGILLCMTGSEAMFA) form a helical membrane-spanning segment. At 286–292 (DLGHFSY) the chain is on the cytoplasmic side. Residues 293–313 (SAIQLAFTSLVYPALILAYMG) form a helical membrane-spanning segment. Residues 314–343 (QAAYLSKHHDFYSNSQVGFYIAVPDKVRWP) are Extracellular-facing. Residues 344–364 (VLVLAILASVVGSQAIISGTF) traverse the membrane as a helical segment. Residues 365–391 (SIINQSQSLSCFPRVKVVHTSDKIHGQ) are Cytoplasmic-facing. Residues 392-412 (IYIPEINWLLMILCIAVTVGF) traverse the membrane as a helical segment. At 413-422 (RDTKHMGNAS) the chain is on the extracellular side. Asparagine 420 carries N-linked (GlcNAc...) asparagine glycosylation. A helical transmembrane segment spans residues 423–443 (GLAVITVMLVTTCLTSLVIML). Over 444 to 448 (CWRRP) the chain is Cytoplasmic. The helical transmembrane segment at 449–469 (PVLALCFLLFFGSVEALYFSA) threads the bilayer. Over 470–473 (SLIK) the chain is Extracellular. The helical transmembrane segment at 474-494 (FLEGAWLPILLALFLMAVMLV) threads the bilayer. Over 495-793 (WHYTTIKKYE…LLEVGMVYVL (299 aa)) the chain is Cytoplasmic. Residues 664 to 675 (DSVQHSSAASVE) are compositionally biased toward polar residues. Positions 664-698 (DSVQHSSAASVETTTTRRRSGGGDDDGSPGGGGGR) are disordered.

It belongs to the HAK/KUP transporter (TC 2.A.72.3) family.

It is found in the membrane. Functionally, high-affinity potassium transporter. This is Putative potassium transporter 8 (HAK8) from Oryza sativa subsp. japonica (Rice).